We begin with the raw amino-acid sequence, 263 residues long: 3-deoxy-manno-octulosonate cytidylyltransferase (263 aa).

Belongs to the KdsB family.

The protein localises to the cytoplasm. It catalyses the reaction 3-deoxy-alpha-D-manno-oct-2-ulosonate + CTP = CMP-3-deoxy-beta-D-manno-octulosonate + diphosphate. The protein operates within nucleotide-sugar biosynthesis; CMP-3-deoxy-D-manno-octulosonate biosynthesis; CMP-3-deoxy-D-manno-octulosonate from 3-deoxy-D-manno-octulosonate and CTP: step 1/1. It participates in bacterial outer membrane biogenesis; lipopolysaccharide biosynthesis. Activates KDO (a required 8-carbon sugar) for incorporation into bacterial lipopolysaccharide in Gram-negative bacteria. This chain is 3-deoxy-manno-octulosonate cytidylyltransferase, found in Burkholderia mallei (strain NCTC 10229).